Reading from the N-terminus, the 294-residue chain is Sulfotransferase 1E1 (294 aa).

Residue 47–52 (KSGTTW) participates in 3'-phosphoadenylyl sulfate binding. 105-107 (KTH) is a substrate binding site. Catalysis depends on H107, which acts as the Proton acceptor. Residues R129, S137, Y192, 226 to 231 (TSFQEM), and 256 to 258 (RKG) each bind 3'-phosphoadenylyl sulfate.

This sequence belongs to the sulfotransferase 1 family. In terms of assembly, homodimer. Liver, intestine and at lower level in the kidney.

The protein resides in the cytoplasm. The protein localises to the cytosol. The enzyme catalyses estrone + 3'-phosphoadenylyl sulfate = estrone 3-sulfate + adenosine 3',5'-bisphosphate + H(+). It catalyses the reaction (24S)-hydroxycholesterol + 3'-phosphoadenylyl sulfate = (24S)-hydroxycholesterol 3-sulfate + adenosine 3',5'-bisphosphate + H(+). It carries out the reaction 17beta-estradiol + 3'-phosphoadenylyl sulfate = 17beta-estradiol 3-sulfate + adenosine 3',5'-bisphosphate + H(+). The catalysed reaction is 3beta-hydroxyandrost-5-en-17-one + 3'-phosphoadenylyl sulfate = dehydroepiandrosterone 3-sulfate + adenosine 3',5'-bisphosphate + H(+). The enzyme catalyses 4-ethylphenol + 3'-phosphoadenylyl sulfate = 4-ethylphenyl sulfate + adenosine 3',5'-bisphosphate + H(+). With respect to regulation, inhibited by estradiol. Sulfotransferase that utilizes 3'-phospho-5'-adenylyl sulfate (PAPS) as sulfonate donor to catalyze the sulfate conjugation of estradiol and estrone. Is a key enzyme in estrogen homeostasis, the sulfation of estrogens leads to their inactivation. Also sulfates dehydroepiandrosterone (DHEA), pregnenolone, (24S)-hydroxycholesterol and xenobiotic compounds like ethinylestradiol, equalenin, diethyl stilbesterol and 1-naphthol at significantly lower efficiency. Does not sulfonate cortisol, testosterone and dopamine. May play a role in gut microbiota-host metabolic interaction. O-sulfonates 4-ethylphenol (4-EP), a dietary tyrosine-derived metabolite produced by gut bacteria. The product 4-EPS crosses the blood-brain barrier and may negatively regulate oligodendrocyte maturation and myelination, affecting the functional connectivity of different brain regions associated with the limbic system. The polypeptide is Sulfotransferase 1E1 (SULT1E1) (Homo sapiens (Human)).